Reading from the N-terminus, the 122-residue chain is Small ribosomal subunit protein uS13 (122 aa).

Residues 97 to 122 (PVRGQRTHTNARTRKGPAKAIAGKKK) are disordered.

The protein belongs to the universal ribosomal protein uS13 family. In terms of assembly, part of the 30S ribosomal subunit. Forms a loose heterodimer with protein S19. Forms two bridges to the 50S subunit in the 70S ribosome.

Its function is as follows. Located at the top of the head of the 30S subunit, it contacts several helices of the 16S rRNA. In the 70S ribosome it contacts the 23S rRNA (bridge B1a) and protein L5 of the 50S subunit (bridge B1b), connecting the 2 subunits; these bridges are implicated in subunit movement. Contacts the tRNAs in the A and P-sites. The polypeptide is Small ribosomal subunit protein uS13 (Bartonella quintana (strain Toulouse) (Rochalimaea quintana)).